A 95-amino-acid chain; its full sequence is Small ribosomal subunit protein bS6 (95 aa).

Belongs to the bacterial ribosomal protein bS6 family.

Binds together with bS18 to 16S ribosomal RNA. This is Small ribosomal subunit protein bS6 from Caldanaerobacter subterraneus subsp. tengcongensis (strain DSM 15242 / JCM 11007 / NBRC 100824 / MB4) (Thermoanaerobacter tengcongensis).